Here is a 518-residue protein sequence, read N- to C-terminus: Metal transporter Nramp1 (518 aa).

12 consecutive transmembrane segments (helical) span residues 35-55, 68-88, 107-127, 131-151, 172-192, 218-238, 255-275, 315-337, 357-377, 382-402, 418-438, and 458-478; these read FLSH…PGNM, ELLW…SLSA, PVWV…ASDI, IGTG…GVLI, VVVA…MSIV, IALL…ALVL, FFLF…IAII, SATV…GTYA, LMTR…GGSS, LIVI…IPLL, IYIV…NIYF, and VLIG…VIYL.

The protein belongs to the NRAMP (TC 2.A.55) family.

The protein resides in the membrane. Probable metal transporter that may participate in the control of iron homeostasis. In Oryza sativa subsp. japonica (Rice), this protein is Metal transporter Nramp1 (NRAMP1).